The primary structure comprises 539 residues: O-phosphoserine--tRNA(Cys) ligase (539 aa).

Substrate-binding positions include 188–190 (HMT), 233–235 (SAS), 275–276 (YY), and asparagine 327.

Belongs to the class-II aminoacyl-tRNA synthetase family. O-phosphoseryl-tRNA(Cys) synthetase subfamily. Homotetramer. Interacts with SepCysS.

It carries out the reaction tRNA(Cys) + O-phospho-L-serine + ATP = O-phospho-L-seryl-tRNA(Cys) + AMP + diphosphate. In terms of biological role, catalyzes the attachment of O-phosphoserine (Sep) to tRNA(Cys). This Methanosarcina barkeri (strain Fusaro / DSM 804) protein is O-phosphoserine--tRNA(Cys) ligase.